The primary structure comprises 342 residues: scyllo-inositol 2-dehydrogenase (NAD(+)) (342 aa).

This sequence belongs to the Gfo/Idh/MocA family.

It catalyses the reaction scyllo-inositol + NAD(+) = scyllo-inosose + NADH + H(+). It functions in the pathway polyol metabolism. Catalyzes the reversible NAD(+)-dependent oxidation of scyllo-inositol (SI) to 2,4,6/3,5-pentahydroxycyclohexanone (scyllo-inosose or SIS). Is required for SI catabolism that allows B.subtilis to utilize SI as the sole carbon source for growth. Cannot use NADP(+) instead of NAD(+). This Bacillus subtilis (strain 168) protein is scyllo-inositol 2-dehydrogenase (NAD(+)).